A 239-amino-acid polypeptide reads, in one-letter code: MTRDQAREKVIFALDSSEFAHVQYWAETLSDRVGMFKVGKQLFTACGPATVRMIQKFGGEVFLDLKFHDIPNTVAMASLEAARLGVKLFNLHALGGYEMMARTVEALDKEFKGGERAKVLAVTILTSSTEETLRQVGIESPVEEMVVRLATLARKAGIDGVVASPREIPLIREACGPDFLIVTPGVRPAFAALNDQKRVMTPAEAVRAGGDYLVIGRPIGDAPDPAGAAEMILDEIMAG.

Residues aspartate 15, lysine 37, 64–73 (DLKFHDIPNT), threonine 126, arginine 187, glutamine 196, glycine 216, and arginine 217 each bind substrate. The active-site Proton donor is lysine 66.

It belongs to the OMP decarboxylase family. Type 1 subfamily. As to quaternary structure, homodimer.

It carries out the reaction orotidine 5'-phosphate + H(+) = UMP + CO2. It participates in pyrimidine metabolism; UMP biosynthesis via de novo pathway; UMP from orotate: step 2/2. Its function is as follows. Catalyzes the decarboxylation of orotidine 5'-monophosphate (OMP) to uridine 5'-monophosphate (UMP). This Geobacter sulfurreducens (strain ATCC 51573 / DSM 12127 / PCA) protein is Orotidine 5'-phosphate decarboxylase.